The chain runs to 106 residues: UPF0145 protein AZOSEA16190 (106 aa).

This sequence belongs to the UPF0145 family.

The protein is UPF0145 protein AZOSEA16190 of Aromatoleum aromaticum (strain DSM 19018 / LMG 30748 / EbN1) (Azoarcus sp. (strain EbN1)).